Here is a 392-residue protein sequence, read N- to C-terminus: MKFVDEATILVVAGDGGNGCVSFRREKYIPRGGPDGGDGGDGGDVYMQADENLNTLIDYRFEKSFRAERGQNGQSRDCTGKRGNDILIKVPVGTRIIDQGTGETLGDMTHHQQKMMVAKGGWHGLGNTRFKSSVNRTPRQKTMGTPGEKRDLQLELMLLADVGMLGLPNAGKSTFIRAVSAAKPKVADYPFTTLVPSLGVVRMDSEQSFVVADIPGLIEGASEGAGLGIRFLKHLERCRVLLHTIDLAPIDESDPVENARIILGELEKYSEKLFQKPRWLVFNKVDLLDEEEAESRAKAIAEALGWTEKYYLISAANRAGVNALCWDVMAFIKANPKEAELVAKQPEKVEFMWDDYHRQQLEEAQPEVEEDDDWDDDWDEDDEEGVETIYQR.

The 159-residue stretch at 1–159 (MKFVDEATIL…RDLQLELMLL (159 aa)) folds into the Obg domain. Residues 127 to 146 (NTRFKSSVNRTPRQKTMGTP) are disordered. Over residues 129–143 (RFKSSVNRTPRQKTM) the composition is skewed to polar residues. One can recognise an OBG-type G domain in the interval 160 to 333 (ADVGMLGLPN…LCWDVMAFIK (174 aa)). GTP is bound by residues 166–173 (GLPNAGKS), 191–195 (FTTLV), 213–216 (DIPG), 283–286 (NKVD), and 314–316 (SAA). The Mg(2+) site is built by S173 and T193. Residues 360–392 (QLEEAQPEVEEDDDWDDDWDEDDEEGVETIYQR) form a disordered region. Residues 364–386 (AQPEVEEDDDWDDDWDEDDEEGV) show a composition bias toward acidic residues.

This sequence belongs to the TRAFAC class OBG-HflX-like GTPase superfamily. OBG GTPase family. Monomer. It depends on Mg(2+) as a cofactor.

It is found in the cytoplasm. An essential GTPase which binds GTP, GDP and possibly (p)ppGpp with moderate affinity, with high nucleotide exchange rates and a fairly low GTP hydrolysis rate. Plays a role in control of the cell cycle, stress response, ribosome biogenesis and in those bacteria that undergo differentiation, in morphogenesis control. This chain is GTPase Obg, found in Erwinia tasmaniensis (strain DSM 17950 / CFBP 7177 / CIP 109463 / NCPPB 4357 / Et1/99).